Consider the following 298-residue polypeptide: uncharacterized protein (298 aa).

Transmembrane regions (helical) follow at residues 9-28, 38-60, 72-94, 104-121, 128-145, 150-167, 174-196, 211-233, 240-262, and 272-291; these read GYVL…LYFK, IIVQ…WKHP, RFVV…VWAV, LGYY…MLLL, LQWL…QQVW, LPWV…YGLI, AALP…WLLF, PEAL…FNAA, ATLG…LLFG, and AFAF…WRSL. In terms of domain architecture, EamA spans 18–141; it reads VIWGLFPLYF…AVALASLGVA (124 aa).

It belongs to the EamA transporter family.

It is found in the cell membrane. This is an uncharacterized protein from Pseudomonas aeruginosa (strain ATCC 15692 / DSM 22644 / CIP 104116 / JCM 14847 / LMG 12228 / 1C / PRS 101 / PAO1).